The sequence spans 288 residues: Cyclin-dependent kinase 2 homolog (288 aa).

Residues 4–284 (YHGLEKIGEG…AKQALEHAYF (281 aa)) enclose the Protein kinase domain. ATP-binding positions include 10-18 (IGEGTYGVV) and K32. Phosphothreonine is present on T14. Y15 bears the Phosphotyrosine mark. D125 (proton acceptor) is an active-site residue. T158 carries the phosphothreonine modification.

It belongs to the protein kinase superfamily. CMGC Ser/Thr protein kinase family. CDC2/CDKX subfamily. May form a complex composed of at least the catalytic subunit CRK2 and a cyclin. Requires Mg(2+) as cofactor. Post-translationally, autophosphorylates in presence of cyclin cyc-1 but not in presence of cyclin cyc-3.

It is found in the cytoplasm. The enzyme catalyses L-seryl-[protein] + ATP = O-phospho-L-seryl-[protein] + ADP + H(+). It carries out the reaction L-threonyl-[protein] + ATP = O-phospho-L-threonyl-[protein] + ADP + H(+). It catalyses the reaction [DNA-directed RNA polymerase] + ATP = phospho-[DNA-directed RNA polymerase] + ADP + H(+). Phosphorylation at Thr-14 or Tyr-15 inactivates the enzyme, while phosphorylation at Thr-158 activates it. Activated by cyclin cyc-1 in vitro. Activated by cyclin cyc-3 in vitro. In terms of biological role, serine/threonine-protein kinase. Involved in the control of the cell cycle. Required for entry into S-phase and mitosis. Probable component of the kinase complex that phosphorylates the repetitive C-terminus of RNA polymerase II. In schizonts, phosphorylates ORC1 resulting in its dissociation from DNA, relocalization to the cytoplasm and likely its degradation. This is Cyclin-dependent kinase 2 homolog from Plasmodium falciparum (isolate 3D7).